Consider the following 186-residue polypeptide: Casparian strip membrane protein 6 (186 aa).

The Cytoplasmic portion of the chain corresponds to 1 to 23 (MKAGPIELGEGKSSAPKAAVNRG). A helical transmembrane segment spans residues 24–44 (VAILDFILRILAFIGTLGSAI). The Extracellular segment spans residues 45-73 (SMATTNETLPFFTQFIRFRAEYDDLPTFT). An N-linked (GlcNAc...) asparagine glycan is attached at Asn50. Residues 74 to 94 (FFVVANGVVSAYLLFSLPFSI) traverse the membrane as a helical segment. At 95–106 (FNIVRSKAQNSR) the chain is on the cytoplasmic side. Residues 107–127 (ILLIILDTAMLGLLSAGASAA) traverse the membrane as a helical segment. Residues 128 to 160 (AAIVYLAHQGNVRTNWSAICQQFNSFCERISGS) lie on the Extracellular side of the membrane. Residue Asn142 is glycosylated (N-linked (GlcNAc...) asparagine). A helical membrane pass occupies residues 161–181 (LIGSFIGVVVFILLISLSAVA). Residues 182–186 (LSRHK) lie on the Cytoplasmic side of the membrane.

Belongs to the Casparian strip membrane proteins (CASP) family. As to quaternary structure, homodimer and heterodimers.

The protein localises to the cell membrane. In terms of biological role, regulates membrane-cell wall junctions and localized cell wall deposition. Required for establishment of the Casparian strip membrane domain (CSD) and the subsequent formation of Casparian strips, a cell wall modification of the root endodermis that determines an apoplastic barrier between the intraorganismal apoplasm and the extraorganismal apoplasm and prevents lateral diffusion. The sequence is that of Casparian strip membrane protein 6 from Populus trichocarpa (Western balsam poplar).